Here is a 557-residue protein sequence, read N- to C-terminus: Small ribosomal subunit protein bS1 (557 aa).

6 consecutive S1 motif domains span residues 21 to 87 (GSIV…LSRE), 105 to 171 (SATV…VSRR), 192 to 260 (GMEV…LGLK), 277 to 347 (GTKL…LGLK), 364 to 434 (GDRV…LGVK), and 451 to 520 (GAIV…LSIR).

The protein belongs to the bacterial ribosomal protein bS1 family.

Functionally, binds mRNA; thus facilitating recognition of the initiation point. It is needed to translate mRNA with a short Shine-Dalgarno (SD) purine-rich sequence. The chain is Small ribosomal subunit protein bS1 (rpsA) from Dickeya dadantii (strain 3937) (Erwinia chrysanthemi (strain 3937)).